Reading from the N-terminus, the 326-residue chain is NADH-specific methylglyoxal reductase (326 aa).

Residues 20–21 (TW) and Asp-54 each bind NAD(+). The active-site Proton donor is Tyr-59. NAD(+)-binding positions include Gln-189, 217–222 (YSPLEQ), Gly-291, and Gln-297.

Belongs to the aldo/keto reductase family. Aldo/keto reductase 11 subfamily. In terms of assembly, monomer.

It carries out the reaction hydroxyacetone + NAD(+) = methylglyoxal + NADH + H(+). Functionally, catalyzes the NADH-dependent reduction of methylglyoxal (2-oxopropanal) in vitro. It is not known if this activity has physiological significance. Cannot use NADPH as a cosubstrate. Seems to play some role in intestinal colonization. This chain is NADH-specific methylglyoxal reductase (ydjG), found in Escherichia coli (strain K12).